A 247-amino-acid chain; its full sequence is uncharacterized protein (247 aa).

The tract at residues 161 to 187 (KEQSDATSDATTSEKNKSPECPKATTE) is disordered. Residues 172-187 (TSEKNKSPECPKATTE) are compositionally biased toward basic and acidic residues.

This is an uncharacterized protein from Mus musculus (Mouse).